A 489-amino-acid polypeptide reads, in one-letter code: DNA-directed RNA polymerase subunit beta' C-terminal section (489 aa).

Residues aspartate 208, aspartate 210, and aspartate 212 each coordinate Mg(2+).

Belongs to the RNA polymerase beta' chain family. RpoC1 subfamily. As to quaternary structure, in plastids the minimal PEP RNA polymerase catalytic core is composed of four subunits: alpha, beta, beta', and beta''. When a (nuclear-encoded) sigma factor is associated with the core the holoenzyme is formed, which can initiate transcription. Requires Mg(2+) as cofactor.

Its subcellular location is the plastid. The protein localises to the chloroplast. The enzyme catalyses RNA(n) + a ribonucleoside 5'-triphosphate = RNA(n+1) + diphosphate. In terms of biological role, DNA-dependent RNA polymerase catalyzes the transcription of DNA into RNA using the four ribonucleoside triphosphates as substrates. This chain is DNA-directed RNA polymerase subunit beta' C-terminal section (rpoC1B), found in Chlamydomonas reinhardtii (Chlamydomonas smithii).